Here is a 129-residue protein sequence, read N- to C-terminus: Small ribosomal subunit protein uS11 (129 aa).

The protein belongs to the universal ribosomal protein uS11 family. In terms of assembly, part of the 30S ribosomal subunit. Interacts with proteins S7 and S18. Binds to IF-3.

Located on the platform of the 30S subunit, it bridges several disparate RNA helices of the 16S rRNA. Forms part of the Shine-Dalgarno cleft in the 70S ribosome. This is Small ribosomal subunit protein uS11 from Methylobacterium nodulans (strain LMG 21967 / CNCM I-2342 / ORS 2060).